A 318-amino-acid polypeptide reads, in one-letter code: Taste receptor type 2 member 60 (318 aa).

Over 1 to 7 the chain is Extracellular; sequence MNGDHMV. Residues 8 to 28 form a helical membrane-spanning segment; sequence LGSSVTDKKAIILVTILLLLR. Residues 29–40 are Cytoplasmic-facing; the sequence is LVAIAGNGFITA. A helical membrane pass occupies residues 41–61; it reads ALGVEWVLRRMLLPCDKLLVS. Over 62-88 the chain is Extracellular; sequence LGASRFCLQSVVMGKTIYVFLHPMAFP. A helical transmembrane segment spans residues 89-109; sequence YNPVLQFLAFQWDFLNAATLW. Over 110–128 the chain is Cytoplasmic; that stretch reads SSTWLSVFYCVKIATFTHP. The chain crosses the membrane as a helical span at residues 129–149; that stretch reads VFFWLKHKLSGWLPWMLFSSV. Over 150 to 183 the chain is Extracellular; it reads GLSSFTTILFFIGNHRMYQNYLRNHLQPWNVTGD. Asn179 carries an N-linked (GlcNAc...) asparagine glycan. A helical membrane pass occupies residues 184-204; it reads SIRSYCEKFYLFPLKMITWTM. Residues 205 to 234 are Cytoplasmic-facing; it reads PTAVFFICMILLITSLGRHRKKALLTTSGF. A helical transmembrane segment spans residues 235–255; the sequence is REPSVQAHIKALLALLSFAML. The Extracellular portion of the chain corresponds to 256 to 264; sequence FISYFLSLV. The chain crosses the membrane as a helical span at residues 265–285; that stretch reads FSAAGIFPPLDFKFWVWESVI. Topologically, residues 286–318 are cytoplasmic; sequence YLCAAVHPIILLFSNCRLRAVLKSRRSSRCGTP.

The protein belongs to the G-protein coupled receptor T2R family. Expressed in subsets of taste receptor cells of the tongue and exclusively in gustducin-positive cells.

It localises to the membrane. Functionally, receptor that may play a role in the perception of bitterness and is gustducin-linked. May play a role in sensing the chemical composition of the gastrointestinal content. The activity of this receptor may stimulate alpha gustducin, mediate PLC-beta-2 activation and lead to the gating of TRPM5. The protein is Taste receptor type 2 member 60 (TAS2R60) of Homo sapiens (Human).